A 356-amino-acid chain; its full sequence is tRNA N6-adenosine threonylcarbamoyltransferase (356 aa).

Fe cation-binding residues include histidine 115 and histidine 119. Residues 139–143, aspartate 173, glycine 186, aspartate 190, and asparagine 291 contribute to the substrate site; that span reads LVSGG. Aspartate 319 provides a ligand contact to Fe cation.

The protein belongs to the KAE1 / TsaD family. Requires Fe(2+) as cofactor.

The protein resides in the cytoplasm. It carries out the reaction L-threonylcarbamoyladenylate + adenosine(37) in tRNA = N(6)-L-threonylcarbamoyladenosine(37) in tRNA + AMP + H(+). Its function is as follows. Required for the formation of a threonylcarbamoyl group on adenosine at position 37 (t(6)A37) in tRNAs that read codons beginning with adenine. Is involved in the transfer of the threonylcarbamoyl moiety of threonylcarbamoyl-AMP (TC-AMP) to the N6 group of A37, together with TsaE and TsaB. TsaD likely plays a direct catalytic role in this reaction. This chain is tRNA N6-adenosine threonylcarbamoyltransferase, found in Arthrobacter sp. (strain FB24).